Here is a 424-residue protein sequence, read N- to C-terminus: Vasopressin V1a receptor (424 aa).

The interval 1 to 40 is disordered; sequence MSFPRGSQDRSVGNSSPWWPLTTEGSNGSQEAARLGEGDS. Residues 1 to 52 lie on the Extracellular side of the membrane; the sequence is MSFPRGSQDRSVGNSSPWWPLTTEGSNGSQEAARLGEGDSPLGDVRNEELAK. Over residues 9–30 the composition is skewed to polar residues; that stretch reads DRSVGNSSPWWPLTTEGSNGSQ. Asn-27 carries N-linked (GlcNAc...) asparagine glycosylation. Residues 53–76 form a helical membrane-spanning segment; it reads LEIAVLAVIFVVAVLGNSSVLLAL. The Cytoplasmic portion of the chain corresponds to 77-88; that stretch reads HRTPRKTSRMHL. Residues 89–110 form a helical membrane-spanning segment; it reads FIRHLSLADLAVAFFQVLPQLC. Topologically, residues 111–125 are extracellular; sequence WDITYRFRGPDWLCR. Cys-124 and Cys-205 form a disulfide bridge. A helical membrane pass occupies residues 126-147; sequence VVKHLQVFAMFASAYMLVVMTA. Residues 148–168 lie on the Cytoplasmic side of the membrane; the sequence is DRYIAVCHPLKTLQQPARRSR. Residues 169–190 form a helical membrane-spanning segment; the sequence is LMIATSWVLSFILSTPQYFIFS. Over 191 to 220 the chain is Extracellular; the sequence is VIEIEVNNGTKTQDCWATFIQPWGTRAYVT. Residues 221–241 form a helical membrane-spanning segment; that stretch reads WMTSGVFVAPVVVLGTCYGFI. The Cytoplasmic segment spans residues 242 to 299; the sequence is CYHIWRNIRGKTASSRHSKGDKGSGEAVGPFHKGLLVTPCVSSVKSISRAKIRTVKMT. Residues 300–319 form a helical membrane-spanning segment; the sequence is FVIVSAYILCWAPFFIVQMW. The Extracellular portion of the chain corresponds to 320–337; the sequence is SVWDENFIWTDSENPSIT. Residues 338 to 357 form a helical membrane-spanning segment; sequence ITALLASLNSCCNPWIYMFF. Topologically, residues 358–424 are cytoplasmic; it reads SGHLLQDCVQ…KSIRFIPVST (67 aa). Residues Cys-371 and Cys-372 are each lipidated (S-palmitoyl cysteine). Residues 383 to 416 are disordered; the sequence is DSDSMSRRQTSYSNNRSPTNSTGMWKDSPKSSKS. Polar residues predominate over residues 389 to 405; that stretch reads RRQTSYSNNRSPTNSTG. The residue at position 410 (Ser-410) is a Phosphoserine.

This sequence belongs to the G-protein coupled receptor 1 family. Vasopressin/oxytocin receptor subfamily. Post-translationally, palmitoylated on three cysteine residues, of which only two are identified. As to expression, localized within gonadotropes of the anterior pituitary of the brain. Broadly distributed throughout the cerebral cortex.

The protein resides in the cell membrane. It is found in the cytoplasmic vesicle membrane. Functionally, receptor for arginine vasopressin. The activity of this receptor is mediated by G proteins which activate a phosphatidyl-inositol-calcium second messenger system. Involved in social memory formation. This is Vasopressin V1a receptor (Avpr1a) from Rattus norvegicus (Rat).